We begin with the raw amino-acid sequence, 411 residues long: GTPase Obg (411 aa).

The Obg domain occupies M1–L157. The interval A20–V45 is disordered. Positions G33–G43 are enriched in gly residues. Positions S158 to R330 constitute an OBG-type G domain. GTP is bound by residues G164–S171, F189–T193, D212–G215, N276–D279, and A311–L313. Mg(2+) contacts are provided by S171 and T191. Positions V335–R411 constitute an OCT domain.

The protein belongs to the TRAFAC class OBG-HflX-like GTPase superfamily. OBG GTPase family. As to quaternary structure, monomer. The cofactor is Mg(2+).

The protein localises to the cytoplasm. In terms of biological role, an essential GTPase which binds GTP, GDP and possibly (p)ppGpp with moderate affinity, with high nucleotide exchange rates and a fairly low GTP hydrolysis rate. Plays a role in control of the cell cycle, stress response, ribosome biogenesis and in those bacteria that undergo differentiation, in morphogenesis control. The polypeptide is GTPase Obg (Rubrobacter xylanophilus (strain DSM 9941 / JCM 11954 / NBRC 16129 / PRD-1)).